The primary structure comprises 292 residues: Hypoxia responsive morphology factor A (292 aa).

The Bipartite nuclear localization signal signature appears at 48 to 70; sequence RRNGRRRNLEYVAQHRRKIARKI. Residues 156–186 are RNA recognition motif (RRM)-like domain; that stretch reads GKEHYSLHLSTLPAIRNAFGDVIFDAIERSP.

It belongs to the hrmA family.

It localises to the nucleus. Hypoxia responsive morphology factor that modulates the expression of the subtelomeric hrmA-associated cluster (HAC) containing genes that alter the hyphal surface (such as reduced total chitin or increased beta-glucan exposure) and perturb inter-hyphal interactions within the developing biofilms, resulting in a loss of vertically aligned polarized growing filaments. Consequently, this hypoxia-typic morphotype (called H-MORPH) with altered biofilm architecture leads to increased hypoxia fitness, increased host inflammation, rapid disease progression, and mortality in a murine model of invasive aspergillosis. The chain is Hypoxia responsive morphology factor A from Aspergillus fumigatus (strain CBS 144.89 / FGSC A1163 / CEA10) (Neosartorya fumigata).